A 215-amino-acid polypeptide reads, in one-letter code: MKILVTGFDPFGGEAINPALEAIKKLPATIHGAEIKCIEVPTVFQKSADVLQQHIESFQPDAVLCIGQAGGRTGLTPERVAINQDDARIPDNEGNQPIDTPIRADGKAAYFSTLPIKAMVAAIHQAGLPASVSNTAGTFVCNHLMYQALYLVDKYCPNAKAGFMHIPFMMEQVVDKPNTAAMNLDDITRGIEAAIFAIVDFKDRSDLKRVGGATH.

Active-site residues include E78, C141, and H165.

The protein belongs to the peptidase C15 family. In terms of assembly, homotetramer.

The protein resides in the cytoplasm. It catalyses the reaction Release of an N-terminal pyroglutamyl group from a polypeptide, the second amino acid generally not being Pro.. Functionally, removes 5-oxoproline from various penultimate amino acid residues except L-proline. In Streptococcus pyogenes serotype M1, this protein is Pyrrolidone-carboxylate peptidase (pcp).